A 475-amino-acid chain; its full sequence is Trifunctional enzyme subunit beta, mitochondrial (475 aa).

The transit peptide at 1–34 (MTTILTYPFKNLPTASKWALRFSIRPLSCSSQLR) directs the protein to the mitochondrion. Lys73 bears the N6-acetyllysine; alternate mark. N6-succinyllysine; alternate is present on Lys73. The active-site Acyl-thioester intermediate is the Cys139. An intramembrane segment occupies 174–221 (IRHSRKMRKLMLDLNKAKSMGQRLSLISKFRFNFLAPELPAVSEFSTS). Lys189 carries the N6-acetyllysine; alternate modification. Lys189 bears the N6-succinyllysine; alternate mark. An N6-succinyllysine mark is found at Lys191, Lys273, and Lys292. Position 294 is an N6-acetyllysine; alternate (Lys294). Lys294 carries the post-translational modification N6-succinyllysine; alternate. The residue at position 299 (Lys299) is an N6-acetyllysine. An N6-acetyllysine; alternate modification is found at Lys333. An N6-succinyllysine; alternate modification is found at Lys333. 2 positions are modified to N6-acetyllysine: Lys349 and Lys362. The active-site Proton donor/acceptor is the Cys459.

This sequence belongs to the thiolase-like superfamily. Thiolase family. As to quaternary structure, heterotetramer of 2 alpha/HADHA and 2 beta/HADHB subunits; forms the mitochondrial trifunctional enzyme. Also purified as higher order heterooligomers including a 4 alpha/HADHA and 4 beta/HADHB heterooligomer which physiological significance remains unclear. The mitochondrial trifunctional enzyme interacts with MTLN. Interacts with RSAD2/viperin.

It is found in the mitochondrion. It localises to the mitochondrion inner membrane. Its subcellular location is the mitochondrion outer membrane. The protein resides in the endoplasmic reticulum. The catalysed reaction is an acyl-CoA + acetyl-CoA = a 3-oxoacyl-CoA + CoA. The enzyme catalyses butanoyl-CoA + acetyl-CoA = 3-oxohexanoyl-CoA + CoA. It catalyses the reaction hexanoyl-CoA + acetyl-CoA = 3-oxooctanoyl-CoA + CoA. It carries out the reaction octanoyl-CoA + acetyl-CoA = 3-oxodecanoyl-CoA + CoA. The catalysed reaction is decanoyl-CoA + acetyl-CoA = 3-oxododecanoyl-CoA + CoA. The enzyme catalyses dodecanoyl-CoA + acetyl-CoA = 3-oxotetradecanoyl-CoA + CoA. It catalyses the reaction tetradecanoyl-CoA + acetyl-CoA = 3-oxohexadecanoyl-CoA + CoA. Its pathway is lipid metabolism; fatty acid beta-oxidation. Its function is as follows. Mitochondrial trifunctional enzyme catalyzes the last three of the four reactions of the mitochondrial beta-oxidation pathway. The mitochondrial beta-oxidation pathway is the major energy-producing process in tissues and is performed through four consecutive reactions breaking down fatty acids into acetyl-CoA. Among the enzymes involved in this pathway, the trifunctional enzyme exhibits specificity for long-chain fatty acids. Mitochondrial trifunctional enzyme is a heterotetrameric complex composed of two proteins, the trifunctional enzyme subunit alpha/HADHA carries the 2,3-enoyl-CoA hydratase and the 3-hydroxyacyl-CoA dehydrogenase activities, while the trifunctional enzyme subunit beta/HADHB described here bears the 3-ketoacyl-CoA thiolase activity. The polypeptide is Trifunctional enzyme subunit beta, mitochondrial (HADHB) (Pan troglodytes (Chimpanzee)).